The following is a 165-amino-acid chain: Cytochrome c-type biogenesis protein CcmE (165 aa).

Residues 1–7 (MTRKQKR) lie on the Cytoplasmic side of the membrane. Residues 8 to 28 (LAIIGGGMSFIVAAVLLVMFA) traverse the membrane as a helical; Signal-anchor for type II membrane protein segment. At 29–165 (FGQSIAYFYM…ASGDKTGATK (137 aa)) the chain is on the periplasmic side. Heme is bound by residues histidine 123 and tyrosine 127. The disordered stretch occupies residues 138-165 (DKGLWQQGAEGAAPAASAASGDKTGATK). Positions 145 to 158 (GAEGAAPAASAASG) are enriched in low complexity.

This sequence belongs to the CcmE/CycJ family.

It is found in the cell inner membrane. In terms of biological role, heme chaperone required for the biogenesis of c-type cytochromes. Transiently binds heme delivered by CcmC and transfers the heme to apo-cytochromes in a process facilitated by CcmF and CcmH. The sequence is that of Cytochrome c-type biogenesis protein CcmE from Agrobacterium fabrum (strain C58 / ATCC 33970) (Agrobacterium tumefaciens (strain C58)).